Reading from the N-terminus, the 174-residue chain is Peptide deformylase (174 aa).

Cysteine 96 and histidine 138 together coordinate Fe cation. Glutamate 139 is a catalytic residue. Histidine 142 contributes to the Fe cation binding site.

The protein belongs to the polypeptide deformylase family. Fe(2+) serves as cofactor.

It carries out the reaction N-terminal N-formyl-L-methionyl-[peptide] + H2O = N-terminal L-methionyl-[peptide] + formate. Removes the formyl group from the N-terminal Met of newly synthesized proteins. Requires at least a dipeptide for an efficient rate of reaction. N-terminal L-methionine is a prerequisite for activity but the enzyme has broad specificity at other positions. This Helicobacter pylori (strain P12) protein is Peptide deformylase.